The primary structure comprises 64 residues: Conotoxin LiC121 (64 aa).

Residues 1–22 form the signal peptide; it reads MRCVPVFIILLLLSPSAPSVDA. Positions 23–48 are excised as a propeptide; that stretch reads HPKTKDDVPLASFHDDAKRTLQRLWI.

Belongs to the conotoxin T superfamily. In terms of processing, contains 2 disulfide bonds that can be either 'C1-C3, C2-C4' or 'C1-C4, C2-C3', since these disulfide connectivities have been observed for conotoxins with cysteine framework V (for examples, see AC P0DQQ7 and AC P81755). Expressed by the venom duct.

The protein resides in the secreted. The sequence is that of Conotoxin LiC121 from Conus lividus (Livid cone).